We begin with the raw amino-acid sequence, 477 residues long: Inositol phosphosphingolipids phospholipase C (477 aa).

Over 1–398 (MYNRKDRDVH…QRQKFFRGLH (398 aa)) the chain is Cytoplasmic. Mg(2+) is bound at residue Glu100. His334 functions as the Proton acceptor in the catalytic mechanism. Residues 399-417 (FWASILLLIASLVVTTFTA) form a helical membrane-spanning segment. The Mitochondrial intermembrane segment spans residues 418–424 (NKAGWSS). A helical transmembrane segment spans residues 425 to 449 (IFWVLFAIAVSISGTIDGAISFLFG). Over 450-477 (RSEIRALIEVEQEVLDAEHHLQTFLSEK) the chain is Cytoplasmic.

Belongs to the neutral sphingomyelinase family. It depends on Mg(2+) as a cofactor.

The protein localises to the endoplasmic reticulum membrane. The protein resides in the mitochondrion outer membrane. The enzyme catalyses an N-acyl-(4R)-4-hydroxysphinganine-1-phosphoinositol + H2O = 1D-myo-inositol 1-phosphate + an N-acyl-(4R)-4-hydroxysphinganine + H(+). It catalyses the reaction a mannosylinositol-1-phospho-N-acyl-sphingoid base + H2O = mannosylinositol-1-phosphate + an N-acyl-sphingoid base + H(+). The catalysed reaction is an inositol phosphomannosylinositol-1-phospho-N-acyl-(4R)-4-hydroxysphinganine + H2O = mannosyldiinositol-1-phosphate + an N-acyl-(4R)-4-hydroxysphinganine + H(+). It functions in the pathway lipid metabolism; sphingolipid metabolism. With respect to regulation, activated through localization to mitochondria in specific growth phases. Functionally, responsible for the hydrolysis of the phosphosphingolipids (IPS), inositol phosphorylceramide (IPC), mannosylinositol phosphorylceramide (MIPC), and mannosyldiinositol phosphorylceramide (M(IP)2C). Regulates sphingolipid metabolism in mitochondria, especially the formation of alpha-hydroxylated very long chain phytoceramides. The generated ceramides contribute to the normal function of mitochondria. Also active on sphingomyelin (SM), but this activity is probably not physiologically relevant. The sequence is that of Inositol phosphosphingolipids phospholipase C from Saccharomyces cerevisiae (strain ATCC 204508 / S288c) (Baker's yeast).